Reading from the N-terminus, the 340-residue chain is Protein arginine N-methyltransferase 6 (340 aa).

Positions 15–339 (DQEYFQCYSD…LRRTKHFHMG (325 aa)) constitute an SAM-dependent MTase PRMT-type domain. S-adenosyl-L-methionine-binding residues include His28, Arg37, Gly61, Glu83, and Glu112. Active-site residues include Glu126 and Glu135.

The protein belongs to the class I-like SAM-binding methyltransferase superfamily. Protein arginine N-methyltransferase family. PRMT6 subfamily.

It localises to the nucleus. The catalysed reaction is L-arginyl-[protein] + 2 S-adenosyl-L-methionine = N(omega),N(omega)-dimethyl-L-arginyl-[protein] + 2 S-adenosyl-L-homocysteine + 2 H(+). Arginine methyltransferase that can catalyze the formation of both omega-N monomethylarginine (MMA) and asymmetrical dimethylarginine (aDMA), with a strong preference for the formation of aDMA. Preferentially methylates arginyl residues present in a glycine and arginine-rich domain and displays preference for monomethylated substrates. Specifically mediates the asymmetric dimethylation of histone H3 'Arg-2' to form H3R2me2a. H3R2me2a represents a specific tag for epigenetic transcriptional repression and is mutually exclusive with methylation on histone H3 'Lys-4' (H3K4me2 and H3K4me3). Acts as a transcriptional repressor of various genes such as HOXA2, THBS1 and TP53. Repression of TP53 blocks cellular senescence. Also methylates histone H2A and H4 'Arg-3' (H2AR3me and H4R3me, respectively). Acts as a regulator of DNA base excision during DNA repair by mediating the methylation of DNA polymerase beta (POLB), leading to the stimulation of its polymerase activity by enhancing DNA binding and processivity. Methylates HMGA1. Regulates alternative splicing events. Acts as a transcriptional coactivator of a number of steroid hormone receptors including ESR1, ESR2, PGR and NR3C1. The polypeptide is Protein arginine N-methyltransferase 6 (prmt6) (Xenopus laevis (African clawed frog)).